A 418-amino-acid polypeptide reads, in one-letter code: ATP-dependent Clp protease ATP-binding subunit ClpX (418 aa).

One can recognise a ClpX-type ZB domain in the interval 1–54 (MTRKDDESDQFFCSFCGKNQKEVKKLIAGPSVYICNECVSLCEEIIEDEDKESL). Positions 13, 16, 35, and 38 each coordinate Zn(2+). 120–127 (PTGCGKTL) provides a ligand contact to ATP.

The protein belongs to the ClpX chaperone family. As to quaternary structure, component of the ClpX-ClpP complex. Forms a hexameric ring that, in the presence of ATP, binds to fourteen ClpP subunits assembled into a disk-like structure with a central cavity, resembling the structure of eukaryotic proteasomes.

Functionally, ATP-dependent specificity component of the Clp protease. It directs the protease to specific substrates. Can perform chaperone functions in the absence of ClpP. This is ATP-dependent Clp protease ATP-binding subunit ClpX from Desulforapulum autotrophicum (strain ATCC 43914 / DSM 3382 / VKM B-1955 / HRM2) (Desulfobacterium autotrophicum).